Here is a 131-residue protein sequence, read N- to C-terminus: MDKLQKTLEEWKEMLDPAQYQVCRLKGTERPFSGKYNETKTEGVYHCICCNEPLFDSTTKFDSGCGWPSFYAPLEGSAVVEVRDVSHGMIRTEVVCAKCDAHLGHVFPDGPPPTGLRYCINSVCLDLVPRQ.

Residues 8–130 (LEEWKEMLDP…NSVCLDLVPR (123 aa)) enclose the MsrB domain. Cys47, Cys50, Cys96, and Cys99 together coordinate Zn(2+). Cys119 serves as the catalytic Nucleophile.

Belongs to the MsrB Met sulfoxide reductase family. Zn(2+) serves as cofactor.

It catalyses the reaction L-methionyl-[protein] + [thioredoxin]-disulfide + H2O = L-methionyl-(R)-S-oxide-[protein] + [thioredoxin]-dithiol. In Pseudomonas savastanoi pv. phaseolicola (strain 1448A / Race 6) (Pseudomonas syringae pv. phaseolicola (strain 1448A / Race 6)), this protein is Peptide methionine sulfoxide reductase MsrB.